The chain runs to 177 residues: Translation initiation factor IF-3 (177 aa).

It belongs to the IF-3 family. Monomer.

Its subcellular location is the cytoplasm. In terms of biological role, IF-3 binds to the 30S ribosomal subunit and shifts the equilibrium between 70S ribosomes and their 50S and 30S subunits in favor of the free subunits, thus enhancing the availability of 30S subunits on which protein synthesis initiation begins. The sequence is that of Translation initiation factor IF-3 from Acaryochloris marina (strain MBIC 11017).